The sequence spans 337 residues: Alanine racemase (337 aa).

The Proton acceptor; specific for D-alanine role is filled by lysine 33. Residue lysine 33 is modified to N6-(pyridoxal phosphate)lysine. Substrate is bound at residue arginine 118. The active-site Proton acceptor; specific for L-alanine is tyrosine 246. Substrate is bound at residue methionine 292.

It belongs to the alanine racemase family. It depends on pyridoxal 5'-phosphate as a cofactor.

It carries out the reaction L-alanine = D-alanine. The protein operates within amino-acid biosynthesis; D-alanine biosynthesis; D-alanine from L-alanine: step 1/1. Functionally, catalyzes the interconversion of L-alanine and D-alanine. May also act on other amino acids. The polypeptide is Alanine racemase (alr) (Campylobacter concisus (strain 13826)).